The sequence spans 468 residues: ATP synthase subunit beta (468 aa).

ATP is bound at residue 155–162; sequence GGAGVGKT.

This sequence belongs to the ATPase alpha/beta chains family. F-type ATPases have 2 components, CF(1) - the catalytic core - and CF(0) - the membrane proton channel. CF(1) has five subunits: alpha(3), beta(3), gamma(1), delta(1), epsilon(1). CF(0) has three main subunits: a(1), b(2) and c(9-12). The alpha and beta chains form an alternating ring which encloses part of the gamma chain. CF(1) is attached to CF(0) by a central stalk formed by the gamma and epsilon chains, while a peripheral stalk is formed by the delta and b chains.

The protein localises to the cell inner membrane. It carries out the reaction ATP + H2O + 4 H(+)(in) = ADP + phosphate + 5 H(+)(out). Produces ATP from ADP in the presence of a proton gradient across the membrane. The catalytic sites are hosted primarily by the beta subunits. The chain is ATP synthase subunit beta from Thermotoga petrophila (strain ATCC BAA-488 / DSM 13995 / JCM 10881 / RKU-1).